A 189-amino-acid polypeptide reads, in one-letter code: Large ribosomal subunit protein bL25 (189 aa).

This sequence belongs to the bacterial ribosomal protein bL25 family. CTC subfamily. Part of the 50S ribosomal subunit; part of the 5S rRNA/L5/L18/L25 subcomplex. Contacts the 5S rRNA. Binds to the 5S rRNA independently of L5 and L18.

Its function is as follows. This is one of the proteins that binds to the 5S RNA in the ribosome where it forms part of the central protuberance. The sequence is that of Large ribosomal subunit protein bL25 from Azobacteroides pseudotrichonymphae genomovar. CFP2.